We begin with the raw amino-acid sequence, 207 residues long: Phosphoenolpyruvate guanylyltransferase (207 aa).

The phosphoenolpyruvate site is built by Thr-137, Gly-153, and Ser-156.

This sequence belongs to the CofC family.

The enzyme catalyses phosphoenolpyruvate + GTP + H(+) = enolpyruvoyl-2-diphospho-5'-guanosine + diphosphate. It functions in the pathway cofactor biosynthesis; coenzyme F420 biosynthesis. Guanylyltransferase that catalyzes the activation of phosphoenolpyruvate (PEP) as enolpyruvoyl-2-diphospho-5'-guanosine, via the condensation of PEP with GTP. It is involved in the biosynthesis of coenzyme F420, a hydride carrier cofactor. The chain is Phosphoenolpyruvate guanylyltransferase from Sphaerobacter thermophilus (strain ATCC 49802 / DSM 20745 / KCCM 41009 / NCIMB 13125 / S 6022).